A 556-amino-acid chain; its full sequence is U-box domain-containing protein 38 (556 aa).

A disordered region spans residues 1–34; that stretch reads MGKNGRLRWNPFSHRSSSSTSSSSRQQQQEQQPP. Low complexity predominate over residues 13–32; the sequence is SHRSSSSTSSSSRQQQQEQQ. The U-box domain maps to 32–108; sequence QPPVEFLCPI…DTWCDTVGVS (77 aa). ARM repeat units follow at residues 256–295, 297–336, 338–378, 380–417, and 418–468; these read DEARVSLCSPRILSLLKNMIVSRYSLVQTNALASLVNLSL, KKNKLTIVRLGFVPILIDVLKSGSREAQEHAAGTIFSLSL, DDNK…HLTL, QTNRSKLVRLGAVPALFSMVRSGESASRALLVICNLAC, and CSEG…ALSH.

Binds to SD16, SD17, SD18 and SD129.

The catalysed reaction is S-ubiquitinyl-[E2 ubiquitin-conjugating enzyme]-L-cysteine + [acceptor protein]-L-lysine = [E2 ubiquitin-conjugating enzyme]-L-cysteine + N(6)-ubiquitinyl-[acceptor protein]-L-lysine.. The protein operates within protein modification; protein ubiquitination. Functions as an E3 ubiquitin ligase. The protein is U-box domain-containing protein 38 (PUB38) of Arabidopsis thaliana (Mouse-ear cress).